We begin with the raw amino-acid sequence, 406 residues long: Tryptophan 2,3-dioxygenase A (406 aa).

Substrate-binding positions include 71-75 and arginine 143; that span reads FIVTH. Residue histidine 327 participates in heme binding. Threonine 341 contributes to the substrate binding site.

Belongs to the tryptophan 2,3-dioxygenase family. In terms of assembly, homotetramer. Dimer of dimers. Requires heme as cofactor.

The catalysed reaction is L-tryptophan + O2 = N-formyl-L-kynurenine. It participates in amino-acid degradation; L-tryptophan degradation via kynurenine pathway; L-kynurenine from L-tryptophan: step 1/2. Functionally, heme-dependent dioxygenase that catalyzes the oxidative cleavage of the L-tryptophan (L-Trp) pyrrole ring and converts L-tryptophan to N-formyl-L-kynurenine. Catalyzes the oxidative cleavage of the indole moiety. The sequence is that of Tryptophan 2,3-dioxygenase A from Danio rerio (Zebrafish).